A 417-amino-acid chain; its full sequence is Fructose-1,6-bisphosphatase 1, chloroplastic (417 aa).

The transit peptide at 1-59 (MAATAATTTSSHLLLSSSRHVASSSQPSILSPRSLFSNNGKRAPTGVRNHQYASGVRCM) directs the protein to the chloroplast. Residues 24-35 (SSQPSILSPRSL) are compositionally biased toward low complexity. A disordered region spans residues 24 to 48 (SSQPSILSPRSLFSNNGKRAPTGVR). Ala-60 bears the N-acetylalanine mark. Glu-138, Glu-167, Asp-188, Leu-190, and Asp-191 together coordinate Mg(2+). 191-194 (DGSS) contributes to the substrate binding site. A disulfide bond links Cys-233 and Cys-238. 5 residues coordinate substrate: Asn-297, Tyr-329, Tyr-347, Tyr-349, and Lys-359. Glu-365 contacts Mg(2+).

It belongs to the FBPase class 1 family. As to quaternary structure, homotetramer. Requires Mg(2+) as cofactor.

It localises to the plastid. The protein localises to the chloroplast stroma. The enzyme catalyses beta-D-fructose 1,6-bisphosphate + H2O = beta-D-fructose 6-phosphate + phosphate. Its pathway is carbohydrate biosynthesis; Calvin cycle. In terms of biological role, catalyzes the irreversible reaction from fructose-1,6-bisphosphate to fructose-6-phosphate and inorganic phosphate, to regenerate the primary CO(2) acceptor molecule, ribulose-1,5-bisphosphate. Involved in the regulation of photosynthetic electron flow and sucrose synthesis. Its activity is critical for normal plant development and important for the regulation of a wide range of metabolic processes. The polypeptide is Fructose-1,6-bisphosphatase 1, chloroplastic (Arabidopsis thaliana (Mouse-ear cress)).